The chain runs to 316 residues: uncharacterized protein (316 aa).

One can recognise an S4 RNA-binding domain in the interval Glu-16–Glu-89. Asp-140 is an active-site residue.

Belongs to the pseudouridine synthase RluA family.

The enzyme catalyses a uridine in RNA = a pseudouridine in RNA. This is an uncharacterized protein from Aquifex aeolicus (strain VF5).